The following is a 132-amino-acid chain: Small ribosomal subunit protein uS8 (132 aa).

Belongs to the universal ribosomal protein uS8 family. In terms of assembly, part of the 30S ribosomal subunit. Contacts proteins S5 and S12.

Its function is as follows. One of the primary rRNA binding proteins, it binds directly to 16S rRNA central domain where it helps coordinate assembly of the platform of the 30S subunit. This is Small ribosomal subunit protein uS8 from Bacillus mycoides (strain KBAB4) (Bacillus weihenstephanensis).